Here is a 292-residue protein sequence, read N- to C-terminus: Fat storage-inducing transmembrane protein 1 (292 aa).

At 1–18 (MERGPVVGAGRGAGARIR) the chain is on the lumenal side. Residues 19 to 39 (ALLGGLVRVLLWVASALLYFG) form a helical membrane-spanning segment. Residues 40-54 (SEQAARLLGSPCLRR) lie on the Cytoplasmic side of the membrane. Residues 55-75 (LYHAWLAAVVIFGPLLQFHVN) form a helical membrane-spanning segment. Residues 76-94 (PRTIFASHGNFFNIKFVNS) are Lumenal-facing. A helical membrane pass occupies residues 95 to 115 (AWGWTCTFLGGFVLLVVFLAT). Over 116–141 (RRVAVTARHLSRLVVGAAVWRGAGRA) the chain is Cytoplasmic. Residues 142–162 (FLLIEDLTGSCFEPLPQGLLL) traverse the membrane as a helical segment. Residues 163-187 (HELPDRRSCLAAGHQWRGYTVSSHT) lie on the Lumenal side of the membrane. Histidine 186 is an active-site residue. A helical membrane pass occupies residues 188–208 (FLLTFCCLLMAEEAAVFAKYL). Topologically, residues 209 to 220 (AHGLPAGAPLRL) are cytoplasmic. Residues 221-241 (VFLLNVLLLGLWNFLLLCTVI) form a helical membrane-spanning segment. The Lumenal segment spans residues 242-249 (YFHQYTHK). The active site involves histidine 244. A helical membrane pass occupies residues 250–270 (VVGAAVGTFAWYLTYGSWYHQ). The Cytoplasmic portion of the chain corresponds to 271–292 (PWSPGSPGHGLFPRPHSIHKHN).

The protein belongs to the FIT family. FIT1 subfamily.

It is found in the endoplasmic reticulum membrane. Plays an important role in the formation of lipid droplets (LDs) which are storage organelles at the center of lipid and energy homeostasis. Directly binds to diacylglycerol (DAGs) and triacylglycerol. This Bos taurus (Bovine) protein is Fat storage-inducing transmembrane protein 1.